Consider the following 557-residue polypeptide: Calcium-dependent protein kinase 4 (557 aa).

Positions 1-72 (MGNTCRGSIG…LVSPRKASMN (72 aa)) are disordered. Residue G2 is the site of N-myristoyl glycine attachment. Residues 15 to 27 (QGYTQPEDSSCST) are compositionally biased toward polar residues. Residues 28 to 48 (NHNPSSGNSYSSSDNFSPTSN) show a composition bias toward low complexity. In terms of domain architecture, Protein kinase spans 94 to 352 (YTLGRKLGQG…AHEVLCHPWI (259 aa)). Residues 100 to 108 (LGQGQFGTT) and K123 each bind ATP. Residue D218 is the Proton acceptor of the active site. Residues 358–388 (APDRALDPAVLSRLKQFSAMNKLKKMALRVI) are autoinhibitory domain. EF-hand domains are found at residues 395–430 (EEIAGLREMFKAMDTDSSGAITFDELKAGLRKYGST), 431–466 (LKDTEIRELMDAADVDNSGTIDYGEFIAATVHLNKL), 467–502 (EREEHLMAAFQYFDKDGSGYITVDEVQQACIEHNMT), and 506–536 (FEDIIREVDQDNDGRIDYGEFVAMMQKGNPC). Residues D408, D410, S412, E419, D444, D446, S448, T450, E455, D480, D482, S484, Y486, E491, D514, D516, D518, R520, and E525 each coordinate Ca(2+).

It belongs to the protein kinase superfamily. Ser/Thr protein kinase family. CDPK subfamily.

It localises to the membrane. It catalyses the reaction L-seryl-[protein] + ATP = O-phospho-L-seryl-[protein] + ADP + H(+). The enzyme catalyses L-threonyl-[protein] + ATP = O-phospho-L-threonyl-[protein] + ADP + H(+). Activated by calcium. Autophosphorylation may play an important role in the regulation of the kinase activity. In terms of biological role, regulates the production of reactive oxygen species (ROS) by NADPH oxidase. The polypeptide is Calcium-dependent protein kinase 4 (CPK4) (Solanum tuberosum (Potato)).